Consider the following 448-residue polypeptide: Glutamyl-tRNA(Gln) amidotransferase subunit D (448 aa).

The 332-residue stretch at 92–423 (SEVKIISTGG…DKIRSLMLTN (332 aa)) folds into the Asparaginase/glutaminase domain. Active-site residues include threonine 102, threonine 178, aspartate 179, and lysine 257.

It belongs to the asparaginase 1 family. GatD subfamily. As to quaternary structure, heterodimer of GatD and GatE.

It catalyses the reaction L-glutamyl-tRNA(Gln) + L-glutamine + ATP + H2O = L-glutaminyl-tRNA(Gln) + L-glutamate + ADP + phosphate + H(+). Its function is as follows. Allows the formation of correctly charged Gln-tRNA(Gln) through the transamidation of misacylated Glu-tRNA(Gln) in organisms which lack glutaminyl-tRNA synthetase. The reaction takes place in the presence of glutamine and ATP through an activated gamma-phospho-Glu-tRNA(Gln). The GatDE system is specific for glutamate and does not act on aspartate. The polypeptide is Glutamyl-tRNA(Gln) amidotransferase subunit D (Sulfurisphaera tokodaii (strain DSM 16993 / JCM 10545 / NBRC 100140 / 7) (Sulfolobus tokodaii)).